A 210-amino-acid polypeptide reads, in one-letter code: Probable peroxygenase 7 (210 aa).

Residues 1-24 are disordered; sequence MSHQTVALASKAKSPKPKRGKLDK. Positions 25-60 constitute an EF-hand domain; sequence EKMTALEKHVSFFDRNKDGTVYPWETYQGFRALGTG. Heme is bound at residue His-33. Ca(2+) contacts are provided by Asp-38, Asn-40, Asp-42, Thr-44, and Glu-49. Residues 81-90 carry the Proline-knot motif; that stretch reads PGKGFSPLFP. Residue Ser-188 is modified to Phosphoserine.

The protein belongs to the caleosin family. Homodimer. The cofactor is heme b. Ca(2+) serves as cofactor. As to expression, expressed in pollen coat.

The protein localises to the secreted. It catalyses the reaction RH + ROOH = ROH + ROH.. In terms of biological role, probable calcium-binding peroxygenase. May be involved in pollination. The sequence is that of Probable peroxygenase 7 (PXG7) from Arabidopsis thaliana (Mouse-ear cress).